The following is a 250-amino-acid chain: Ubiquinone/menaquinone biosynthesis C-methyltransferase UbiE (250 aa).

S-adenosyl-L-methionine-binding positions include threonine 73, aspartate 94, and 122-123 (DA).

Belongs to the class I-like SAM-binding methyltransferase superfamily. MenG/UbiE family.

It carries out the reaction a 2-demethylmenaquinol + S-adenosyl-L-methionine = a menaquinol + S-adenosyl-L-homocysteine + H(+). The enzyme catalyses a 2-methoxy-6-(all-trans-polyprenyl)benzene-1,4-diol + S-adenosyl-L-methionine = a 5-methoxy-2-methyl-3-(all-trans-polyprenyl)benzene-1,4-diol + S-adenosyl-L-homocysteine + H(+). It functions in the pathway quinol/quinone metabolism; menaquinone biosynthesis; menaquinol from 1,4-dihydroxy-2-naphthoate: step 2/2. It participates in cofactor biosynthesis; ubiquinone biosynthesis. In terms of biological role, methyltransferase required for the conversion of demethylmenaquinol (DMKH2) to menaquinol (MKH2) and the conversion of 2-polyprenyl-6-methoxy-1,4-benzoquinol (DDMQH2) to 2-polyprenyl-3-methyl-6-methoxy-1,4-benzoquinol (DMQH2). The protein is Ubiquinone/menaquinone biosynthesis C-methyltransferase UbiE of Coxiella burnetii (strain RSA 331 / Henzerling II).